A 337-amino-acid chain; its full sequence is Aspartate-semialdehyde dehydrogenase 2 (337 aa).

NADP(+) is bound by residues 13–16 (TGAV) and 41–42 (RS). R101 contacts phosphate. Residue C132 is the Acyl-thioester intermediate of the active site. A substrate-binding site is contributed by Q159. 162–163 (SG) contacts NADP(+). K216 contacts phosphate. R238 provides a ligand contact to substrate. H245 acts as the Proton acceptor in catalysis. An NADP(+)-binding site is contributed by N316.

Belongs to the aspartate-semialdehyde dehydrogenase family. In terms of assembly, homodimer.

It carries out the reaction L-aspartate 4-semialdehyde + phosphate + NADP(+) = 4-phospho-L-aspartate + NADPH + H(+). The protein operates within amino-acid biosynthesis; L-lysine biosynthesis via DAP pathway; (S)-tetrahydrodipicolinate from L-aspartate: step 2/4. It functions in the pathway amino-acid biosynthesis; L-methionine biosynthesis via de novo pathway; L-homoserine from L-aspartate: step 2/3. Its pathway is amino-acid biosynthesis; L-threonine biosynthesis; L-threonine from L-aspartate: step 2/5. In terms of biological role, catalyzes the NADPH-dependent formation of L-aspartate-semialdehyde (L-ASA) by the reductive dephosphorylation of L-aspartyl-4-phosphate. This chain is Aspartate-semialdehyde dehydrogenase 2 (asd2), found in Vibrio cholerae serotype O1 (strain ATCC 39315 / El Tor Inaba N16961).